The following is a 689-amino-acid chain: Glycine--tRNA ligase beta subunit (689 aa).

Belongs to the class-II aminoacyl-tRNA synthetase family. In terms of assembly, tetramer of two alpha and two beta subunits.

The protein resides in the cytoplasm. It carries out the reaction tRNA(Gly) + glycine + ATP = glycyl-tRNA(Gly) + AMP + diphosphate. This Escherichia coli O7:K1 (strain IAI39 / ExPEC) protein is Glycine--tRNA ligase beta subunit.